We begin with the raw amino-acid sequence, 906 residues long: Protein translocase subunit SecA (906 aa).

ATP is bound by residues Gln89, 107-111 (GEGKT), and Asp502. The Zn(2+) site is built by Cys890, Cys892, Cys901, and His902.

Belongs to the SecA family. In terms of assembly, monomer and homodimer. Part of the essential Sec protein translocation apparatus which comprises SecA, SecYEG and auxiliary proteins SecDF-YajC and YidC. The cofactor is Zn(2+).

It localises to the cell inner membrane. The protein localises to the cytoplasm. It carries out the reaction ATP + H2O + cellular proteinSide 1 = ADP + phosphate + cellular proteinSide 2.. Functionally, part of the Sec protein translocase complex. Interacts with the SecYEG preprotein conducting channel. Has a central role in coupling the hydrolysis of ATP to the transfer of proteins into and across the cell membrane, serving both as a receptor for the preprotein-SecB complex and as an ATP-driven molecular motor driving the stepwise translocation of polypeptide chains across the membrane. The polypeptide is Protein translocase subunit SecA (Brucella canis (strain ATCC 23365 / NCTC 10854 / RM-666)).